The primary structure comprises 778 residues: MTTRQATKDPLLRGVSPTPSKIPVRSQKRTPFPTVTSCAVDQENQDPRRWVQKPPLNIQRPLVDSAGPRPKARHQAETSQRLVGISQPRNPLEELRPSPRGQNVGPGPPAQTEAPGTIEFVADPAALATILSGEGVKSCHLGRQPSLAKRVLVRGSQGGTTQRVQGVRASAYLAPRTPTHRLDPARASCFSRLEGPGPRGRTLCPQRLQALISPSGPSFHPSTRPSFQELRRETAGSSRTSVSQASGLLLETPVQPAFSLPKGEREVVTHSDEGGVASLGLAQRVPLRENREMSHTRDSHDSHLMPSPAPVAQPLPGHVVPCPSPFGRAQRVPSPGPPTLTSYSVLRRLTVQPKTRFTPMPSTPRVQQAQWLRGVSPQSCSEDPALPWEQVAVRLFDQESCIRSLEGSGKPPVATPSGPHSNRTPSLQEVKIQRIGILQQLLRQEVEGLVGGQCVPLNGGSSLDMVELQPLLTEISRTLNATEHNSGTSHLPGLLKHSGLPKPCLPEECGEPQPCPPAEPGPPEAFCRSEPEIPEPSLQEQLEVPEPYPPAEPRPLESCCRSEPEIPESSRQEQLEVPEPCPPAEPRPLESYCRIEPEIPESSRQEQLEVPEPCPPAEPGPLQPSTQGQSGPPGPCPRVELGASEPCTLEHRSLESSLPPCCSQWAPATTSLIFSSQHPLCASPPICSLQSLRPPAGQAGLSNLAPRTLALRERLKSCLTAIHCFHEARLDDECAFYTSRAPPSGPTRVCTNPVATLLEWQDALCFIPVGSAAPQGSP.

Over residues 1-11 the composition is skewed to basic and acidic residues; it reads MTTRQATKDPL. The segment at 1–115 is disordered; sequence MTTRQATKDP…PGPPAQTEAP (115 aa). Phosphoserine occurs at positions 16, 98, and 170. The segment at 212–244 is disordered; sequence ISPSGPSFHPSTRPSFQELRRETAGSSRTSVSQ. A compositionally biased stretch (polar residues) spans 235–244; sequence AGSSRTSVSQ. Phosphoserine occurs at positions 324, 334, 344, and 362. The residue at position 363 (T363) is a Phosphothreonine. A Phosphoserine modification is found at S376. 3 disordered regions span residues 406–425, 508–587, and 600–641; these read EGSG…NRTP, ECGE…AEPR, and PESS…RVEL. The segment covering 513-523 has biased composition (pro residues); the sequence is QPCPPAEPGPP. A run of 4 repeats spans residues 516–548, 549–581, 582–614, and 615–647. The interval 516–647 is 4 X 33 AA approximate tandem repeats; that stretch reads PPAEPGPPEA…RVELGASEPC (132 aa). The span at 560-574 shows a compositional bias: basic and acidic residues; sequence CRSEPEIPESSRQEQ. Residues 612–622 show a composition bias toward pro residues; the sequence is EPCPPAEPGPL.

As to quaternary structure, directly binds bystin, and indirectly trophinin. As to expression, strong expression at implantation sites. Was exclusively localized to the apical side of the syncytiotrophoblast. Also found in macrophages.

The protein resides in the cytoplasm. Functionally, could be involved with bystin and trophinin in a cell adhesion molecule complex that mediates an initial attachment of the blastocyst to uterine epithelial cells at the time of the embryo implantation. This Homo sapiens (Human) protein is Tastin (TROAP).